The following is a 422-amino-acid chain: BTB/POZ domain-containing protein KCTD18 (422 aa).

The BTB domain occupies 12–80; it reads DILRLNVGGC…YLHGEVHIPT (69 aa). Disordered regions lie at residues 289–357 and 376–422; these read VKNS…THLP and LRRT…DQTK. The span at 396 to 406 shows a compositional bias: pro residues; that stretch reads PAGPPEPPPDA. A compositionally biased stretch (polar residues) spans 413–422; the sequence is WTENGQDQTK.

The chain is BTB/POZ domain-containing protein KCTD18 (KCTD18) from Bos taurus (Bovine).